The sequence spans 185 residues: Casparian strip membrane protein 2 (185 aa).

The Cytoplasmic portion of the chain corresponds to 1–25 (MKAVSIEAGEGSKAKRVHGVNRGIS). The helical transmembrane segment at 26 to 46 (VFDLVLRIVALVGTLASAVAM) threads the bilayer. The Extracellular portion of the chain corresponds to 47-73 (GTADQALSFSTQIVNFEAQYDDIDAFK). Residues 74–94 (FFVVSNSITCVYLALSIPISI) traverse the membrane as a helical segment. The Cytoplasmic portion of the chain corresponds to 95-106 (FHIIRSRAGKSR). The helical transmembrane segment at 107–127 (VLLIVLDAIMLVFLTSGASAA) threads the bilayer. At 128-160 (AAIVYLAHNGNTSTNWFSICQQYTDFCQRSAGS) the chain is on the extracellular side. N-linked (GlcNAc...) asparagine glycosylation is present at N138. The helical transmembrane segment at 161–181 (LIGSFGAMALMVLLIILSSIA) threads the bilayer. Over 182–185 (LSRR) the chain is Cytoplasmic.

This sequence belongs to the Casparian strip membrane proteins (CASP) family. As to quaternary structure, homodimer and heterodimers.

The protein localises to the cell membrane. Its function is as follows. Regulates membrane-cell wall junctions and localized cell wall deposition. Required for establishment of the Casparian strip membrane domain (CSD) and the subsequent formation of Casparian strips, a cell wall modification of the root endodermis that determines an apoplastic barrier between the intraorganismal apoplasm and the extraorganismal apoplasm and prevents lateral diffusion. The chain is Casparian strip membrane protein 2 from Solanum demissum (Wild potato).